Consider the following 375-residue polypeptide: GDP-mannose-dependent alpha-mannosyltransferase (375 aa).

This sequence belongs to the glycosyltransferase group 1 family. Glycosyltransferase 4 subfamily.

Its pathway is phospholipid metabolism; phosphatidylinositol metabolism. In terms of biological role, catalyzes the addition of a mannose residue from GDP-D-mannose to GlcAGroAc2 to generate 1,2-di-O-C16/C18:1-(alpha-D-mannopyranosyl)-(1-4)-(alpha-D-glucopyranosyluronic acid)-(1-3)-glycerol(ManGlcAGroAc2). The sequence is that of GDP-mannose-dependent alpha-mannosyltransferase (mgtA) from Mycolicibacterium smegmatis (strain ATCC 700084 / mc(2)155) (Mycobacterium smegmatis).